Reading from the N-terminus, the 63-residue chain is Overexpressed in colon carcinoma 1 protein homolog (63 aa).

Positions 1–10 (MGCGNSTATS) are enriched in polar residues. The disordered stretch occupies residues 1–39 (MGCGNSTATSAAAGRGPTGAVKDTTEDSITEDDKRRNYG).

The protein belongs to the OCC1 family.

This chain is Overexpressed in colon carcinoma 1 protein homolog, found in Mus musculus (Mouse).